The chain runs to 479 residues: UDP-N-acetylmuramate--L-alanine ligase (479 aa).

128-134 (GAHGKTT) is a binding site for ATP.

It belongs to the MurCDEF family.

Its subcellular location is the cytoplasm. The enzyme catalyses UDP-N-acetyl-alpha-D-muramate + L-alanine + ATP = UDP-N-acetyl-alpha-D-muramoyl-L-alanine + ADP + phosphate + H(+). It participates in cell wall biogenesis; peptidoglycan biosynthesis. In terms of biological role, cell wall formation. The sequence is that of UDP-N-acetylmuramate--L-alanine ligase from Psychrobacter arcticus (strain DSM 17307 / VKM B-2377 / 273-4).